The sequence spans 225 residues: uncharacterized protein (225 aa).

Residues 181–203 (INIFVVFMFIIYLLFYIISSTVF) form a helical membrane-spanning segment.

The protein resides in the cell membrane. This is an uncharacterized protein from Bacillus anthracis.